A 583-amino-acid chain; its full sequence is Chromosomal replication initiator protein DnaA (583 aa).

Residues 1 to 91 (MNAENLDPAT…SPMFPAFKVM (91 aa)) are domain I, interacts with DnaA modulators. 2 disordered regions span residues 86 to 179 (PAFK…QQPV) and 197 to 232 (VAGF…NYRD). Residues 91 to 235 (MPPAQPEPQT…VTGNYRDPVT (145 aa)) are domain II. The span at 97-106 (EPQTTASPED) shows a compositional bias: polar residues. Basic and acidic residues-rich tracts occupy residues 126–135 (EDSRTPRHSA) and 147–174 (QERE…EHEP). The span at 205 to 226 (AGTTAPQYPPQSEMQGSFTPGV) shows a compositional bias: polar residues. Positions 236 to 460 (HLNSNDTFDT…GALKRVIAMA (225 aa)) are domain III, AAA+ region. Residues Gly-280, Gly-282, Lys-283, and Thr-284 each contribute to the ATP site. Residues 461–583 (SLNHQPVTRA…TVELKQHLND (123 aa)) are domain IV, binds dsDNA.

Belongs to the DnaA family. Oligomerizes as a right-handed, spiral filament on DNA at oriC.

It is found in the cytoplasm. In terms of biological role, plays an essential role in the initiation and regulation of chromosomal replication. ATP-DnaA binds to the origin of replication (oriC) to initiate formation of the DNA replication initiation complex once per cell cycle. Binds the DnaA box (a 9 base pair repeat at the origin) and separates the double-stranded (ds)DNA. Forms a right-handed helical filament on oriC DNA; dsDNA binds to the exterior of the filament while single-stranded (ss)DNA is stabiized in the filament's interior. The ATP-DnaA-oriC complex binds and stabilizes one strand of the AT-rich DNA unwinding element (DUE), permitting loading of DNA polymerase. After initiation quickly degrades to an ADP-DnaA complex that is not apt for DNA replication. Binds acidic phospholipids. This is Chromosomal replication initiator protein DnaA from Bifidobacterium animalis subsp. lactis (strain AD011).